Consider the following 104-residue polypeptide: Large ribosomal subunit protein uL24 (104 aa).

A compositionally biased stretch (basic and acidic residues) spans 82–92 (RIGYRTDENGK). Residues 82 to 104 (RIGYRTDENGKRVRISRRNGKDI) are disordered. The segment covering 93–104 (RVRISRRNGKDI) has biased composition (basic residues).

It belongs to the universal ribosomal protein uL24 family. As to quaternary structure, part of the 50S ribosomal subunit.

One of two assembly initiator proteins, it binds directly to the 5'-end of the 23S rRNA, where it nucleates assembly of the 50S subunit. Functionally, one of the proteins that surrounds the polypeptide exit tunnel on the outside of the subunit. The polypeptide is Large ribosomal subunit protein uL24 (Nocardia farcinica (strain IFM 10152)).